The following is a 252-amino-acid chain: 3-dehydroquinate dehydratase (252 aa).

3-dehydroquinate is bound by residues S21, 46–48 (EWR), and R82. The active-site Proton donor/acceptor is the H143. The Schiff-base intermediate with substrate role is filled by K170. 3-dehydroquinate is bound by residues R213, S232, and Q236.

It belongs to the type-I 3-dehydroquinase family. Homodimer.

It catalyses the reaction 3-dehydroquinate = 3-dehydroshikimate + H2O. It functions in the pathway metabolic intermediate biosynthesis; chorismate biosynthesis; chorismate from D-erythrose 4-phosphate and phosphoenolpyruvate: step 3/7. Its function is as follows. Involved in the third step of the chorismate pathway, which leads to the biosynthesis of aromatic amino acids. Catalyzes the cis-dehydration of 3-dehydroquinate (DHQ) and introduces the first double bond of the aromatic ring to yield 3-dehydroshikimate. In Escherichia coli (strain 55989 / EAEC), this protein is 3-dehydroquinate dehydratase.